The chain runs to 212 residues: MKIINAEFIKGAVKAEQFPEIGVSEFAFFGRSNAGKSSLINMLVNRKNLVKTGSRPGMTREVNFFLVNRPASLNFNPKTKKFSGPAPKDMFVLTDLPGYGYAKLSGGMTLQIDKMLYEYCTNRPLLKIIFFLMDMRREPTETEKESIGFFHGLNIEVVIVGTKADKIGKNDQIKAKNDWADFFNFDEELIIISSAAKKTGRDNILSLIAKRI.

Positions 22–212 (GVSEFAFFGR…NILSLIAKRI (191 aa)) constitute an EngB-type G domain. GTP-binding positions include 30–37 (GRSNAGKS), 57–61 (GMTRE), 95–98 (DLPG), 162–165 (TKAD), and 192–195 (ISSA). Mg(2+) is bound by residues serine 37 and threonine 59.

Belongs to the TRAFAC class TrmE-Era-EngA-EngB-Septin-like GTPase superfamily. EngB GTPase family. It depends on Mg(2+) as a cofactor.

Functionally, necessary for normal cell division and for the maintenance of normal septation. This chain is Probable GTP-binding protein EngB, found in Treponema denticola (strain ATCC 35405 / DSM 14222 / CIP 103919 / JCM 8153 / KCTC 15104).